The primary structure comprises 189 residues: Leucine repeat adapter protein 25 (189 aa).

Ser28 is modified (phosphoserine). Positions 55-81 (LSRAARAPDGPRHAAGSANLGSAAGPR) are disordered. Positions 68–79 (AAGSANLGSAAG) are enriched in low complexity. The LRR repeat unit spans residues 86–114 (LDSALAALRKEMVGLRQLDMSLLCQLWGL). Positions 141 to 174 (DSSYPPDAGLSDDDEPPDASLPPDPPPLTVPQTH) are disordered. The segment covering 159–169 (ASLPPDPPPLT) has biased composition (pro residues). Ser188 bears the Phosphoserine mark.

Belongs to the FAM89 family. As to quaternary structure, interacts with SKI. Interacts (via LRR repeat) with CDC42BPA (via AGC-kinase C-terminal domain) and CDC42BPB (via AGC-kinase C-terminal domain). Interacts (via LRR repeat) with LIMK1 (via LIM zinc-binding domains). Forms a tripartite complex with CDC42BPA, CDC42BPB and LIMK1.

The protein localises to the cytoplasm. The protein resides in the cell projection. Its subcellular location is the lamellipodium. Functionally, negatively regulates TGF-beta-induced signaling; in cooperation with SKI prevents the translocation of SMAD2 from the nucleus to the cytoplasm in response to TGF-beta. Acts as an adapter that mediates the specific recognition of LIMK1 by CDC42BPA and CDC42BPB in the lamellipodia. LRAP25-mediated CDC42BPA/CDC42BPB targeting to LIMK1 and the lamellipodium results in LIMK1 activation and the subsequent phosphorylation of CFL1 which is important for lamellipodial F-actin regulation. The sequence is that of Leucine repeat adapter protein 25 from Rattus norvegicus (Rat).